A 430-amino-acid polypeptide reads, in one-letter code: UDP-N-acetylglucosamine 1-carboxyvinyltransferase (430 aa).

22-23 (KN) serves as a coordination point for phosphoenolpyruvate. Arg102 lines the UDP-N-acetyl-alpha-D-glucosamine pocket. Cys126 (proton donor) is an active-site residue. 2-(S-cysteinyl)pyruvic acid O-phosphothioketal is present on Cys126. UDP-N-acetyl-alpha-D-glucosamine-binding positions include 131–135 (RPVDL), 172–175 (KVSV), Asp317, and Ile339.

This sequence belongs to the EPSP synthase family. MurA subfamily.

Its subcellular location is the cytoplasm. It carries out the reaction phosphoenolpyruvate + UDP-N-acetyl-alpha-D-glucosamine = UDP-N-acetyl-3-O-(1-carboxyvinyl)-alpha-D-glucosamine + phosphate. The protein operates within cell wall biogenesis; peptidoglycan biosynthesis. In terms of biological role, cell wall formation. Adds enolpyruvyl to UDP-N-acetylglucosamine. The sequence is that of UDP-N-acetylglucosamine 1-carboxyvinyltransferase from Sinorhizobium fredii (strain NBRC 101917 / NGR234).